Consider the following 947-residue polypeptide: Ionotropic receptor 25a (947 aa).

The signal sequence occupies residues 1 to 30 (MILMNPKTSKILWLLGFLSLLSSFSLEIAA). Residues 31 to 562 (QTTQNINVLF…SLFKFLTVLE (532 aa)) lie on the Extracellular side of the membrane. 4 N-linked (GlcNAc...) asparagine glycosylation sites follow: N78, N177, N277, and N434. Residues 563–583 (TNVWLCILAAYFFTSFLMWIF) form a helical membrane-spanning segment. The Cytoplasmic portion of the chain corresponds to 584-641 (DRWSPYSYQNNREKYKDDEEKREFNLKECLWFCMTSLTPQGGGEAPKNLSGRLVAATW). A helical transmembrane segment spans residues 642 to 662 (WLFGFIIIASYTANLAAFLTV). The Extracellular portion of the chain corresponds to 663–858 (SRLDTPVESL…DQSDGISIQN (196 aa)). Residues N687, N715, and N762 are each glycosylated (N-linked (GlcNAc...) asparagine). The helical transmembrane segment at 859–879 (IGGVFIVIFVGIGMACITLVF) threads the bilayer. Topologically, residues 880–947 (EYWWYRYRKN…QYPATFKPRF (68 aa)) are cytoplasmic.

The protein belongs to the glutamate-gated ion channel (TC 1.A.10.1) family. As to quaternary structure, interacts with nocte. As to expression, in the antenna, detected in neurons of the arista and also detected in sacculus neurons which innervate the first and second chambers (at protein level). Throughout the main body of the antenna, expressed in neurons which innervate the coeloconic class of olfactory sensilla (at protein level). Expressed in multiple cells of the dorsal organ including the dorsal organ cool cells (at protein level). Detected in femur and retina. Expressed in a subset of femur chordonotal neurons and antennal Johnston's Organ neurons.

It is found in the cell membrane. The protein localises to the cell projection. The protein resides in the axon. Its subcellular location is the dendrite. It localises to the perikaryon. It is found in the cilium. Functionally, integral part of various neural sensory systems in the antenna that provide the neural basis for the response to environmental changes in temperature (thermosensation), humidity (hygrosensation) and odor detection. Required for odor-evoked electrophysiological responses in multiple neuron classes in the antenna and is likely to function as part of an olfactory receptor complex with Ir76a and Ir76b. Together with Ir21a and Ir93a, mediates the response of the larval dorsal organ cool cells, a trio of cool-responsive neurons, to cooling and is required for cool avoidance behavior. Required in chordonotal organ neurons for behavioral synchronization to low-amplitude temperature cycles and mediates circadian clock resetting by temperature. Together with Ir40a and Ir93a, mediates the response of the hydrosensory sacculus neurons to changes in relative humidity, and is required for dry detection and humidiy preference behavior. The polypeptide is Ionotropic receptor 25a (Drosophila melanogaster (Fruit fly)).